Reading from the N-terminus, the 165-residue chain is Inorganic pyrophosphatase (165 aa).

Substrate is bound by residues Lys-21, Arg-35, and Tyr-47. 3 residues coordinate Mg(2+): Asp-57, Asp-62, and Asp-94. Tyr-131 provides a ligand contact to substrate.

It belongs to the PPase family. In terms of assembly, homohexamer. Requires Mg(2+) as cofactor.

Its subcellular location is the cytoplasm. The catalysed reaction is diphosphate + H2O = 2 phosphate + H(+). In terms of biological role, catalyzes the hydrolysis of inorganic pyrophosphate (PPi) forming two phosphate ions. This Geobacillus stearothermophilus (Bacillus stearothermophilus) protein is Inorganic pyrophosphatase.